A 511-amino-acid polypeptide reads, in one-letter code: Lysine--tRNA ligase (511 aa).

Residues 1 to 21 (MHTEKDPNKNTPEQQTPISLN) are disordered. The span at 9 to 21 (KNTPEQQTPISLN) shows a compositional bias: polar residues. Mg(2+)-binding residues include Glu422 and Glu429.

The protein belongs to the class-II aminoacyl-tRNA synthetase family. As to quaternary structure, homodimer. The cofactor is Mg(2+).

The protein localises to the cytoplasm. It carries out the reaction tRNA(Lys) + L-lysine + ATP = L-lysyl-tRNA(Lys) + AMP + diphosphate. The sequence is that of Lysine--tRNA ligase from Pelodictyon phaeoclathratiforme (strain DSM 5477 / BU-1).